Reading from the N-terminus, the 236-residue chain is ATP synthase subunit a (236 aa).

Helical transmembrane passes span leucine 17–alanine 37, methionine 80–isoleucine 100, valine 114–leucine 134, isoleucine 179–isoleucine 199, and phenylalanine 208–methionine 228.

This sequence belongs to the ATPase A chain family. In terms of assembly, F-type ATPases have 2 components, CF(1) - the catalytic core - and CF(0) - the membrane proton channel. CF(1) has five subunits: alpha(3), beta(3), gamma(1), delta(1), epsilon(1). CF(0) has three main subunits: a(1), b(2) and c(9-12). The alpha and beta chains form an alternating ring which encloses part of the gamma chain. CF(1) is attached to CF(0) by a central stalk formed by the gamma and epsilon chains, while a peripheral stalk is formed by the delta and b chains.

The protein localises to the cell membrane. Its function is as follows. Key component of the proton channel; it plays a direct role in the translocation of protons across the membrane. This chain is ATP synthase subunit a, found in Anoxybacillus flavithermus (strain DSM 21510 / WK1).